A 502-amino-acid chain; its full sequence is TGF-beta-activated kinase 1 and MAP3K7-binding protein 1 (502 aa).

Residues 1-21 (MAAQRRSLLQSEQQPSWTDDL) form a disordered region. At Ser-7 the chain carries Phosphoserine. The span at 7–17 (SLLQSEQQPSW) shows a compositional bias: polar residues. Positions 28 to 365 (GVGSASNRSY…EDMTLLVRNF (338 aa)) constitute a PPM-type phosphatase domain. Ser-393 carries O-linked (GlcNAc) serine glycosylation. Polar residues predominate over residues 414–437 (QMVNGSHSASTLDEATPTLTNQSP). Residues 414 to 476 (QMVNGSHSAS…SLPPGEDGRV (63 aa)) are disordered. A Phosphoserine modification is found at Ser-421. The residue at position 429 (Thr-429) is a Phosphothreonine. The residue at position 436 (Ser-436) is a Phosphoserine. Over residues 438–455 (TLTLQSTNTHTQSSSSSS) the composition is skewed to low complexity. Position 440 is a phosphothreonine (Thr-440).

In terms of assembly, interacts with XIAP and BIRC7. Interacts with TRAF6 and MAP3K7; during IL-1 signaling. Identified in the TRIKA2 complex composed of MAP3K7, TAB1 and TAB2. Interacts with TRAF6 and MAPK14; these interactions allow MAPK14 autophosphorylation. Interacts with STING1; interaction takes place following cGAMP activation and promotes TAB1 recruitment to the endoplasmic reticulum, triggering MAP3K7/TAK1 activation and STING1 phosphorylation. Post-translationally, phosphorylated at all three sites Ser-421, Thr-429 and Ser-436 by MAPK14 when cells were exposed to cellular stresses, or stimulated with TNF-alpha, IL1 or LPS. These phosphorylations inhibit TAK1 activation by a feedback control mechanism. Dephosphorylated by DUSP14 at Ser-436, leading to TAB1-MAP3K7/TAK1 complex inactivation in T-cells. Ubiquitinated by MAP3K1 with 'Lys-63'-linked polyubiquitin; leading to activation of TAK1 and of JNK and p38 MAP kinases following EGF and TGF-beta stimulation. Ubiquitinated by ITCH with 'Lys-48'-linked polyubiquitin; leading to proteasomal degradation. Ubiquitinated by RNF114 during maternal-to-zygotic transition; leading to degradation. In terms of processing, O-GlcNAcylated at Ser-393 is required for full MAP3K7/TAK1 activation upon stimulation with IL-1 or osmotic stress.

It is found in the cytoplasm. The protein localises to the cytosol. It localises to the endoplasmic reticulum membrane. Its function is as follows. Key adapter protein that plays an essential role in JNK and NF-kappa-B activation and proinflammatory cytokines production in response to stimulation with TLRs and cytokines. Mechanistically, associates with the catalytic domain of MAP3K7/TAK1 to trigger MAP3K7/TAK1 autophosphorylation leading to its full activation. Similarly, associates with MAPK14 and triggers its autophosphorylation and subsequent activation. In turn, MAPK14 phosphorylates TAB1 and inhibits MAP3K7/TAK1 activation in a feedback control mechanism. Also plays a role in recruiting MAPK14 to the TAK1 complex for the phosphorylation of the TAB2 and TAB3 regulatory subunits. The protein is TGF-beta-activated kinase 1 and MAP3K7-binding protein 1 (Tab1) of Mus musculus (Mouse).